The primary structure comprises 532 residues: Glucose-6-phosphate isomerase (532 aa).

The active-site Proton donor is Glu-330. Residues His-359 and Lys-460 contribute to the active site.

The protein belongs to the GPI family.

Its subcellular location is the cytoplasm. The enzyme catalyses alpha-D-glucose 6-phosphate = beta-D-fructose 6-phosphate. It functions in the pathway carbohydrate biosynthesis; gluconeogenesis. The protein operates within carbohydrate degradation; glycolysis; D-glyceraldehyde 3-phosphate and glycerone phosphate from D-glucose: step 2/4. Functionally, catalyzes the reversible isomerization of glucose-6-phosphate to fructose-6-phosphate. The polypeptide is Glucose-6-phosphate isomerase (Prochlorococcus marinus (strain MIT 9211)).